Reading from the N-terminus, the 1043-residue chain is Desmoglein-1 (1043 aa).

A signal peptide spans 1–23 (MNWPFFRAAVVLFIFLVVLEVNS). Residues 24–49 (DFRIQVRDYNTKNGTIKWHSLRRQKR) constitute a propeptide that is removed on maturation. 4 Cadherin domains span residues 50–158 (EWIK…PVFS), 159–270 (MSTF…PYME), 271–385 (LPTQ…GSVF), and 386–498 (RPGS…VNGS). The Extracellular portion of the chain corresponds to 50–551 (EWIKFAAACR…PLRDNVHFGP (502 aa)). N-linked (GlcNAc...) asparagine glycans are attached at residues asparagine 110 and asparagine 180. The N-linked (GlcNAc...) asparagine glycan is linked to asparagine 496. A helical membrane pass occupies residues 552–572 (AGIGLLIMGFLVLGLVPFLLM). Topologically, residues 573 to 1043 (CCDCGGAPGG…TKYSTVQYTK (471 aa)) are cytoplasmic. Positions 770 to 807 (DVEPFPDSDPSWPPKSTEPVCPPQGTEPTGGGHPPISP) are disordered. Desmoglein repeat repeat units lie at residues 819 to 845 (TYPS…TVTE), 846 to 875 (SYTS…ERVV), 876 to 905 (GPIS…ERVI), 906 to 933 (APSS…ERVI), and 934 to 962 (QPTS…ERVV).

In terms of assembly, binds to JUP/plakoglobin. Interacts with PKP2. Interacts with DSC3; there is evidence to suggest that the interaction promotes cell-cell adhesion of keratinocytes. Expressed in the epidermis. Expressed in the muzzle epithelium.

It localises to the cell membrane. The protein localises to the cell junction. The protein resides in the desmosome. It is found in the cytoplasm. Its subcellular location is the nucleus. Its function is as follows. Component of intercellular desmosome junctions. Involved in the interaction of plaque proteins and intermediate filaments mediating cell-cell adhesion. The sequence is that of Desmoglein-1 (DSG1) from Bos taurus (Bovine).